A 400-amino-acid chain; its full sequence is CCA-adding enzyme (400 aa).

Residues Gly-28 and Arg-31 each coordinate ATP. CTP contacts are provided by Gly-28 and Arg-31. Residues Asp-41 and Asp-43 each coordinate Mg(2+). ATP contacts are provided by Arg-112, Asp-155, Arg-158, Arg-161, and Arg-164. Residues Arg-112, Asp-155, Arg-158, Arg-161, and Arg-164 each coordinate CTP.

It belongs to the tRNA nucleotidyltransferase/poly(A) polymerase family. Bacterial CCA-adding enzyme type 3 subfamily. In terms of assembly, homodimer. Mg(2+) serves as cofactor.

It carries out the reaction a tRNA precursor + 2 CTP + ATP = a tRNA with a 3' CCA end + 3 diphosphate. It catalyses the reaction a tRNA with a 3' CCA end + 2 CTP + ATP = a tRNA with a 3' CCACCA end + 3 diphosphate. Its function is as follows. Catalyzes the addition and repair of the essential 3'-terminal CCA sequence in tRNAs without using a nucleic acid template. Adds these three nucleotides in the order of C, C, and A to the tRNA nucleotide-73, using CTP and ATP as substrates and producing inorganic pyrophosphate. tRNA 3'-terminal CCA addition is required both for tRNA processing and repair. Also involved in tRNA surveillance by mediating tandem CCA addition to generate a CCACCA at the 3' terminus of unstable tRNAs. While stable tRNAs receive only 3'-terminal CCA, unstable tRNAs are marked with CCACCA and rapidly degraded. This chain is CCA-adding enzyme, found in Staphylococcus epidermidis (strain ATCC 12228 / FDA PCI 1200).